Consider the following 166-residue polypeptide: Small ribosomal subunit protein uS5 (166 aa).

The S5 DRBM domain occupies 11–74 (LIEKLVSVKR…ENAKKNMVSV (64 aa)).

The protein belongs to the universal ribosomal protein uS5 family. In terms of assembly, part of the 30S ribosomal subunit. Contacts proteins S4 and S8.

Its function is as follows. With S4 and S12 plays an important role in translational accuracy. Functionally, located at the back of the 30S subunit body where it stabilizes the conformation of the head with respect to the body. The chain is Small ribosomal subunit protein uS5 from Francisella tularensis subsp. tularensis (strain FSC 198).